We begin with the raw amino-acid sequence, 521 residues long: BAR/IMD domain-containing adapter protein 2 (521 aa).

Residues 1–250 (MSLSRSEEMH…VQLMQQIASS (250 aa)) form the IMD domain. Positions 132 to 153 (DALDKCQAELKKLRKKSQGSKN) form a coiled coil. 4 positions are modified to phosphoserine: serine 262, serine 324, serine 326, and serine 337. The tract at residues 299-370 (VMNGVAGPDS…TLPRSSSMAA (72 aa)) is disordered. Positions 321–335 (QPKSLSPPQSQSKLS) are enriched in low complexity. Threonine 341 bears the Phosphothreonine mark. Serine 347 is modified (phosphoserine). The span at 349–368 (TPKNSYATTENKTLPRSSSM) shows a compositional bias: polar residues. At threonine 361 the chain carries Phosphothreonine. 4 positions are modified to phosphoserine: serine 367, serine 385, serine 396, and serine 455. An SH3 domain is found at 375–438 (NGRMRVKAIF…PFSYTRVLDS (64 aa)). The interval 445–480 (HMSLQQGKSSSTGNLLDKDDLAVPPPDYGTSSRAFP) is disordered. The span at 447–458 (SLQQGKSSSTGN) shows a compositional bias: polar residues.

Homodimer. Interacts with CDC42 and RAC1 that have been activated by GTP binding. Interacts with ATN1, ADGRB1, DIAPH1, EPS8, SHANK1, SHANK2, SHANK3, TIAM1, WASF1 and WASF2. Interacts with ENAH after recruitment of CDC42. Post-translationally, phosphorylated on tyrosine residues by INSR in response to insulin treatment.

The protein localises to the cytoplasm. It is found in the membrane. It localises to the cell projection. The protein resides in the filopodium. Its subcellular location is the ruffle. The protein localises to the cytoskeleton. Its function is as follows. Adapter protein that links membrane-bound small G-proteins to cytoplasmic effector proteins. Necessary for CDC42-mediated reorganization of the actin cytoskeleton and for RAC1-mediated membrane ruffling. Involved in the regulation of the actin cytoskeleton by WASF family members and the Arp2/3 complex. Plays a role in neurite growth. Acts syngeristically with ENAH to promote filipodia formation. Plays a role in the reorganization of the actin cytoskeleton in response to bacterial infection. Participates in actin bundling when associated with EPS8, promoting filopodial protrusions. The polypeptide is BAR/IMD domain-containing adapter protein 2 (BAIAP2) (Cricetulus griseus (Chinese hamster)).